The sequence spans 255 residues: MALPDFSMRQLLEAGVHFGHQTHRWNPKMKPYIFGDRNNIHIIDLAQTVPMLSRALQVVSDTVARGGRVLFVGTKRQASEIIADSAKRSAQYYVNSRWLGGMMTNWKTISNSIQRLRKVDEILNSEGSGYSKKERLTLEREREKLEKALGGIRDMGGVPDLMFIIDTNKEKIAIEEAKRLGIPVVAIIDSNCDPDHIDYPIPGNDDASRAISLYCDLIARAAIDGIARQQGASGRDIGASEEAPIEPALEDEAGA.

The interval 232 to 255 (ASGRDIGASEEAPIEPALEDEAGA) is disordered.

This sequence belongs to the universal ribosomal protein uS2 family.

This Agrobacterium fabrum (strain C58 / ATCC 33970) (Agrobacterium tumefaciens (strain C58)) protein is Small ribosomal subunit protein uS2.